Here is a 344-residue protein sequence, read N- to C-terminus: tRNA N6-adenosine threonylcarbamoyltransferase (344 aa).

Fe cation contacts are provided by His111 and His115. Residues 133–137 (VVSGG), Asp166, Gly179, Asp183, and Asn270 each bind substrate. Asp298 is a Fe cation binding site.

It belongs to the KAE1 / TsaD family. Fe(2+) is required as a cofactor.

It is found in the cytoplasm. It catalyses the reaction L-threonylcarbamoyladenylate + adenosine(37) in tRNA = N(6)-L-threonylcarbamoyladenosine(37) in tRNA + AMP + H(+). Its function is as follows. Required for the formation of a threonylcarbamoyl group on adenosine at position 37 (t(6)A37) in tRNAs that read codons beginning with adenine. Is involved in the transfer of the threonylcarbamoyl moiety of threonylcarbamoyl-AMP (TC-AMP) to the N6 group of A37, together with TsaE and TsaB. TsaD likely plays a direct catalytic role in this reaction. The chain is tRNA N6-adenosine threonylcarbamoyltransferase from Persephonella marina (strain DSM 14350 / EX-H1).